A 330-amino-acid chain; its full sequence is DNA-directed RNA polymerase subunit alpha (330 aa).

The alpha N-terminal domain (alpha-NTD) stretch occupies residues 1–235 (MQGSVTEFLK…EQLEAFVDLR (235 aa)). An alpha C-terminal domain (alpha-CTD) region spans residues 249–330 (FDPILLRPVD…WPPASIADNE (82 aa)).

Belongs to the RNA polymerase alpha chain family. Homodimer. The RNAP catalytic core consists of 2 alpha, 1 beta, 1 beta' and 1 omega subunit. When a sigma factor is associated with the core the holoenzyme is formed, which can initiate transcription.

It catalyses the reaction RNA(n) + a ribonucleoside 5'-triphosphate = RNA(n+1) + diphosphate. Its function is as follows. DNA-dependent RNA polymerase catalyzes the transcription of DNA into RNA using the four ribonucleoside triphosphates as substrates. The chain is DNA-directed RNA polymerase subunit alpha from Yersinia enterocolitica serotype O:8 / biotype 1B (strain NCTC 13174 / 8081).